The sequence spans 310 residues: 4-hydroxy-3-methylbut-2-enyl diphosphate reductase (310 aa).

[4Fe-4S] cluster is bound at residue cysteine 12. 2 residues coordinate (2E)-4-hydroxy-3-methylbut-2-enyl diphosphate: histidine 41 and histidine 74. The dimethylallyl diphosphate site is built by histidine 41 and histidine 74. 2 residues coordinate isopentenyl diphosphate: histidine 41 and histidine 74. Position 96 (cysteine 96) interacts with [4Fe-4S] cluster. Histidine 124 is a (2E)-4-hydroxy-3-methylbut-2-enyl diphosphate binding site. Histidine 124 contributes to the dimethylallyl diphosphate binding site. Histidine 124 provides a ligand contact to isopentenyl diphosphate. The Proton donor role is filled by glutamate 126. (2E)-4-hydroxy-3-methylbut-2-enyl diphosphate is bound at residue threonine 167. Residue cysteine 197 participates in [4Fe-4S] cluster binding. Positions 225, 226, 227, and 269 each coordinate (2E)-4-hydroxy-3-methylbut-2-enyl diphosphate. Serine 225, serine 226, asparagine 227, and serine 269 together coordinate dimethylallyl diphosphate. 4 residues coordinate isopentenyl diphosphate: serine 225, serine 226, asparagine 227, and serine 269.

This sequence belongs to the IspH family. The cofactor is [4Fe-4S] cluster.

The enzyme catalyses isopentenyl diphosphate + 2 oxidized [2Fe-2S]-[ferredoxin] + H2O = (2E)-4-hydroxy-3-methylbut-2-enyl diphosphate + 2 reduced [2Fe-2S]-[ferredoxin] + 2 H(+). It catalyses the reaction dimethylallyl diphosphate + 2 oxidized [2Fe-2S]-[ferredoxin] + H2O = (2E)-4-hydroxy-3-methylbut-2-enyl diphosphate + 2 reduced [2Fe-2S]-[ferredoxin] + 2 H(+). Its pathway is isoprenoid biosynthesis; dimethylallyl diphosphate biosynthesis; dimethylallyl diphosphate from (2E)-4-hydroxy-3-methylbutenyl diphosphate: step 1/1. It functions in the pathway isoprenoid biosynthesis; isopentenyl diphosphate biosynthesis via DXP pathway; isopentenyl diphosphate from 1-deoxy-D-xylulose 5-phosphate: step 6/6. Functionally, catalyzes the conversion of 1-hydroxy-2-methyl-2-(E)-butenyl 4-diphosphate (HMBPP) into a mixture of isopentenyl diphosphate (IPP) and dimethylallyl diphosphate (DMAPP). Acts in the terminal step of the DOXP/MEP pathway for isoprenoid precursor biosynthesis. The polypeptide is 4-hydroxy-3-methylbut-2-enyl diphosphate reductase (Tolumonas auensis (strain DSM 9187 / NBRC 110442 / TA 4)).